The chain runs to 498 residues: Ribose import ATP-binding protein RbsA (498 aa).

2 consecutive ABC transporter domains span residues 2-237 (LALQ…VGRD) and 247-491 (VTPG…TGQQ). ATP is bound at residue 34-41 (GENGAGKS).

It belongs to the ABC transporter superfamily. Ribose importer (TC 3.A.1.2.1) family. In terms of assembly, the complex is composed of an ATP-binding protein (RbsA), two transmembrane proteins (RbsC) and a solute-binding protein (RbsB).

It is found in the cell membrane. The catalysed reaction is D-ribose(out) + ATP + H2O = D-ribose(in) + ADP + phosphate + H(+). Part of the ABC transporter complex RbsABC involved in ribose import. Responsible for energy coupling to the transport system. The protein is Ribose import ATP-binding protein RbsA of Deinococcus geothermalis (strain DSM 11300 / CIP 105573 / AG-3a).